Consider the following 167-residue polypeptide: MDKFSELGSIAWLWTNSELHQNWPLSLFSTNVIPAIETQQYVLLVRDGMPIAYCSWARLNLETEVKYINDVTSLKLEDWQSGDRYWFIDWIAPFGDSYLLTKHMRKLFSDGLFRAIRVDAGSPNGKISEFYGRNVDAKLAMQSFEQYQKELMNALSQQDNFIISTSK.

Catalysis depends on residues His-20 and Asp-89.

This sequence belongs to the RTX toxin acyltransferase family.

Its subcellular location is the cytoplasm. It catalyses the reaction tetradecanoyl-[ACP] + L-lysyl-[protein] = N(6)-tetradecanoyl-L-lysyl-[protein] + holo-[ACP] + H(+). In terms of biological role, protein-lysine myristoyltransferase that catalyzes myristoylation of the protoxin (RtxA) at two internal lysine residues, thereby converting it to the active toxin. This Kingella kingae protein is Protein-lysine myristoyltransferase RtxC.